A 264-amino-acid polypeptide reads, in one-letter code: Sororin (264 aa).

A disordered region spans residues 1–45; it reads MAERRTRSGGAAQRSGPRTSLTKPSKSSKRKSGSDLPNSFSEIWP. Residues Ser20, Ser32, Ser34, Ser78, and Ser82 each carry the phosphoserine modification. A KEN box motif is present at residues 87–89; the sequence is KEN. At Thr97 the chain carries Phosphothreonine. Residue Ser106 is modified to Phosphoserine. Residues Thr110, Thr114, and Thr159 each carry the phosphothreonine modification. An FGF motif motif is present at residues 166–168; it reads FGF. Residue Ser222 is modified to Phosphoserine. The tract at residues 242 to 264 is C-terminal Sororin domain; sequence LDKWAVAMNAEFEAAEQFELLIE.

This sequence belongs to the sororin family. Interacts with the APC/C complex. Interacts with the chromatin-bound cohesin complex; the interaction is indirect, occurs after DNA replication and requires acetylation of the cohesin component SMC3. Interacts (via the FGF motif) with PDS5A and PDS5B; the interaction is direct and prevents the interaction of PDS5A with WAPL. In terms of processing, phosphorylated. Phosphorylation, as cells enter mitosis, disrupts the interaction with PDS5A and relieves the inhibition of WAPL by CDCA5. Ubiquitinated by the APC/C complex in G1, leading to its degradation.

The protein resides in the nucleus. It localises to the chromosome. The protein localises to the cytoplasm. In terms of biological role, regulator of sister chromatid cohesion in mitosis stabilizing cohesin complex association with chromatin. May antagonize the action of WAPL which stimulates cohesin dissociation from chromatin. Cohesion ensures that chromosome partitioning is accurate in both meiotic and mitotic cells and plays an important role in DNA repair. Required for efficient DNA double-stranded break repair. This Mus musculus (Mouse) protein is Sororin (Cdca5).